The sequence spans 256 residues: MLAKRIIPCLDVRDGQVVKGVQFRNHEIIGDIVPLAQRYAEEGADELVFYDITASSDGRTIDKSWVERVAQVIDIPFCVAGGIKSVEDAEKLFAFGADKISINSPALADPDLINRLADRFGVQAIVVGIDSWFEKETGKYWVNQYTGDESRTRQTHWQLLDWVKEVQQRGAGEIVLNMMNQDGVRQGYDIAQLKLVRNLCHIPLIASGGAGEMVHFRDAFIEANVDGALAASVFHKRIIDIGELKDYLRKEKIKIR.

Active-site residues include aspartate 11 and aspartate 130.

It belongs to the HisA/HisF family. Heterodimer of HisH and HisF.

The protein localises to the cytoplasm. The catalysed reaction is 5-[(5-phospho-1-deoxy-D-ribulos-1-ylimino)methylamino]-1-(5-phospho-beta-D-ribosyl)imidazole-4-carboxamide + L-glutamine = D-erythro-1-(imidazol-4-yl)glycerol 3-phosphate + 5-amino-1-(5-phospho-beta-D-ribosyl)imidazole-4-carboxamide + L-glutamate + H(+). It functions in the pathway amino-acid biosynthesis; L-histidine biosynthesis; L-histidine from 5-phospho-alpha-D-ribose 1-diphosphate: step 5/9. In terms of biological role, IGPS catalyzes the conversion of PRFAR and glutamine to IGP, AICAR and glutamate. The HisF subunit catalyzes the cyclization activity that produces IGP and AICAR from PRFAR using the ammonia provided by the HisH subunit. In Pasteurella multocida (strain Pm70), this protein is Imidazole glycerol phosphate synthase subunit HisF (hisF).